We begin with the raw amino-acid sequence, 137 residues long: Nucleoside diphosphate kinase (137 aa).

The ATP site is built by lysine 11, phenylalanine 59, arginine 87, threonine 93, arginine 104, and asparagine 114. The active-site Pros-phosphohistidine intermediate is histidine 117.

The protein belongs to the NDK family. As to quaternary structure, homotetramer. The cofactor is Mg(2+).

It localises to the cytoplasm. It catalyses the reaction a 2'-deoxyribonucleoside 5'-diphosphate + ATP = a 2'-deoxyribonucleoside 5'-triphosphate + ADP. The catalysed reaction is a ribonucleoside 5'-diphosphate + ATP = a ribonucleoside 5'-triphosphate + ADP. In terms of biological role, major role in the synthesis of nucleoside triphosphates other than ATP. The ATP gamma phosphate is transferred to the NDP beta phosphate via a ping-pong mechanism, using a phosphorylated active-site intermediate. The protein is Nucleoside diphosphate kinase of Parafrankia sp. (strain EAN1pec).